An 84-amino-acid polypeptide reads, in one-letter code: U4-theraphotoxin-Hhn1aa (84 aa).

The signal sequence occupies residues 1-22; that stretch reads MKVTLIAILTCAAVLVLHTTAA. Residues 23–47 constitute a propeptide that is removed on maturation; that stretch reads EELEESQLMEVGMPDTELAAVDEER. 2 disulfide bridges follow: Cys51-Cys65 and Cys55-Cys76.

Belongs to the neurotoxin 12 (Hwtx-2) family. 02 (Hwtx-2) subfamily. In terms of tissue distribution, expressed by the venom gland.

The protein resides in the secreted. Postsynaptic neurotoxin. This is U4-theraphotoxin-Hhn1aa from Cyriopagopus hainanus (Chinese bird spider).